The primary structure comprises 226 residues: Uracil-DNA glycosylase (226 aa).

The active-site Proton acceptor is D65.

The protein belongs to the uracil-DNA glycosylase (UDG) superfamily. UNG family.

The protein localises to the cytoplasm. The enzyme catalyses Hydrolyzes single-stranded DNA or mismatched double-stranded DNA and polynucleotides, releasing free uracil.. Its function is as follows. Excises uracil residues from the DNA which can arise as a result of misincorporation of dUMP residues by DNA polymerase or due to deamination of cytosine. This is Uracil-DNA glycosylase from Enterococcus faecalis (strain ATCC 700802 / V583).